The chain runs to 173 residues: Crossover junction endodeoxyribonuclease RuvC (173 aa).

Active-site residues include Asp8, Glu67, and Asp139. The Mg(2+) site is built by Asp8, Glu67, and Asp139.

The protein belongs to the RuvC family. As to quaternary structure, homodimer which binds Holliday junction (HJ) DNA. The HJ becomes 2-fold symmetrical on binding to RuvC with unstacked arms; it has a different conformation from HJ DNA in complex with RuvA. In the full resolvosome a probable DNA-RuvA(4)-RuvB(12)-RuvC(2) complex forms which resolves the HJ. Requires Mg(2+) as cofactor.

Its subcellular location is the cytoplasm. The catalysed reaction is Endonucleolytic cleavage at a junction such as a reciprocal single-stranded crossover between two homologous DNA duplexes (Holliday junction).. Functionally, the RuvA-RuvB-RuvC complex processes Holliday junction (HJ) DNA during genetic recombination and DNA repair. Endonuclease that resolves HJ intermediates. Cleaves cruciform DNA by making single-stranded nicks across the HJ at symmetrical positions within the homologous arms, yielding a 5'-phosphate and a 3'-hydroxyl group; requires a central core of homology in the junction. The consensus cleavage sequence is 5'-(A/T)TT(C/G)-3'. Cleavage occurs on the 3'-side of the TT dinucleotide at the point of strand exchange. HJ branch migration catalyzed by RuvA-RuvB allows RuvC to scan DNA until it finds its consensus sequence, where it cleaves and resolves the cruciform DNA. This chain is Crossover junction endodeoxyribonuclease RuvC, found in Salmonella agona (strain SL483).